The chain runs to 78 residues: Probable [Fe-S]-dependent transcriptional repressor (78 aa).

Positions 56, 61, 64, and 70 each coordinate iron-sulfur cluster.

Belongs to the FeoC family.

Its function is as follows. May function as a transcriptional regulator that controls feoABC expression. The chain is Probable [Fe-S]-dependent transcriptional repressor from Escherichia coli O127:H6 (strain E2348/69 / EPEC).